The following is a 72-amino-acid chain: Putative membrane protein insertion efficiency factor (72 aa).

The protein belongs to the UPF0161 family.

Its subcellular location is the cell inner membrane. Functionally, could be involved in insertion of integral membrane proteins into the membrane. The polypeptide is Putative membrane protein insertion efficiency factor (Myxococcus xanthus (strain DK1622)).